A 205-amino-acid chain; its full sequence is Outer-membrane lipoprotein LolB (205 aa).

Positions 1–17 (MFLRHCITFTLIALLAG) are cleaved as a signal peptide. A lipid anchor (N-palmitoyl cysteine) is attached at cysteine 18. A lipid anchor (S-diacylglycerol cysteine) is attached at cysteine 18.

This sequence belongs to the LolB family. As to quaternary structure, monomer.

The protein localises to the cell outer membrane. Functionally, plays a critical role in the incorporation of lipoproteins in the outer membrane after they are released by the LolA protein. In Pseudomonas putida (strain ATCC 47054 / DSM 6125 / CFBP 8728 / NCIMB 11950 / KT2440), this protein is Outer-membrane lipoprotein LolB.